The following is a 171-amino-acid chain: NADP-reducing hydrogenase subunit HndA (171 aa).

[2Fe-2S] cluster-binding residues include Cys98, Cys103, Cys139, and Cys143.

The protein belongs to the complex I 24 kDa subunit family. As to quaternary structure, heterotetramer composed of HndA, HndB, HndC and HndD subunits. HndA and HndB could form a heterodimeric intermediate in the electron transfer between the active site of hydrogenase subunit HndD and the NADP reduction site of the reducing subunit HndC. [2Fe-2S] cluster is required as a cofactor.

The enzyme catalyses H2 + NADP(+) = NADPH + H(+). Inhibited by oxygen. Its function is as follows. Catalyzes the reduction of NADP in the presence of molecular H(2) to yield NADPH. The protein is NADP-reducing hydrogenase subunit HndA (hndA) of Solidesulfovibrio fructosivorans (Desulfovibrio fructosivorans).